We begin with the raw amino-acid sequence, 305 residues long: Oxygen-dependent coproporphyrinogen-III oxidase (305 aa).

Ser-94 is a substrate binding site. A divalent metal cation contacts are provided by His-98 and His-108. His-108 acts as the Proton donor in catalysis. 110–112 is a substrate binding site; sequence NVR. His-147 and His-177 together coordinate a divalent metal cation. An important for dimerization region spans residues 242 to 277; the sequence is YVEFNLVYDRGTLFGLQTGGRTESILMSMPPLVRWE. 260 to 262 serves as a coordination point for substrate; the sequence is GGR.

It belongs to the aerobic coproporphyrinogen-III oxidase family. Homodimer. The cofactor is a divalent metal cation.

The protein resides in the cytoplasm. It catalyses the reaction coproporphyrinogen III + O2 + 2 H(+) = protoporphyrinogen IX + 2 CO2 + 2 H2O. It functions in the pathway porphyrin-containing compound metabolism; protoporphyrin-IX biosynthesis; protoporphyrinogen-IX from coproporphyrinogen-III (O2 route): step 1/1. Functionally, involved in the heme biosynthesis. Catalyzes the aerobic oxidative decarboxylation of propionate groups of rings A and B of coproporphyrinogen-III to yield the vinyl groups in protoporphyrinogen-IX. The chain is Oxygen-dependent coproporphyrinogen-III oxidase from Shewanella denitrificans (strain OS217 / ATCC BAA-1090 / DSM 15013).